Consider the following 224-residue polypeptide: MDKQQLAKMIDHTILKPEADKASIEKLCKEALEYNFASVCINPTNVELAAKLLKGSEVKVCTVIGFPLGANTMEVKAFETKDAIAKGADEVDMVINIGRLKDKDYEYVEKDIKAVVDAADKKAVTKVIIETCLLTEEEKVKACELAKKAGADFVKTSTGFSTGGATPEDIKLMRETVGPDMGVKASGGVRSIEDAEAVIKNGATRIGASASIAICEGKVSDSTY.

The active-site Proton donor/acceptor is Asp-92. Lys-155 functions as the Schiff-base intermediate with acetaldehyde in the catalytic mechanism. Lys-184 serves as the catalytic Proton donor/acceptor.

This sequence belongs to the DeoC/FbaB aldolase family. DeoC type 1 subfamily.

Its subcellular location is the cytoplasm. The catalysed reaction is 2-deoxy-D-ribose 5-phosphate = D-glyceraldehyde 3-phosphate + acetaldehyde. Its pathway is carbohydrate degradation; 2-deoxy-D-ribose 1-phosphate degradation; D-glyceraldehyde 3-phosphate and acetaldehyde from 2-deoxy-alpha-D-ribose 1-phosphate: step 2/2. In terms of biological role, catalyzes a reversible aldol reaction between acetaldehyde and D-glyceraldehyde 3-phosphate to generate 2-deoxy-D-ribose 5-phosphate. This is Deoxyribose-phosphate aldolase from Clostridium perfringens (strain SM101 / Type A).